A 552-amino-acid polypeptide reads, in one-letter code: Alcohol dehydrogenase [acceptor] (552 aa).

3–32 (DYIIVGAGSAGCVLANRLSADPSKRVCLLE) serves as a coordination point for FAD. Residue His-469 is the Proton acceptor of the active site.

Belongs to the GMC oxidoreductase family. The cofactor is FAD.

The protein resides in the cell inner membrane. It catalyses the reaction a primary alcohol + A = an aldehyde + AH2. Its function is as follows. Converts aliphatic medium-chain-length alcohols into aldehydes. May be linked to the electron transfer chain. In Pseudomonas putida (Arthrobacter siderocapsulatus), this protein is Alcohol dehydrogenase [acceptor] (alkJ).